The sequence spans 407 residues: M protein, serotype 2.1 (407 aa).

The first 41 residues, 1 to 41 (MARKDTNKQYSLRKLKTGTASVAVAVAVLGAGFANQTTVKA), serve as a signal peptide directing secretion. The segment at 81–94 (VEEEHKKVEEEHKK) is 2 X 7 AA tandem repeats. 4 stretches are compositionally biased toward basic and acidic residues: residues 83-144 (EEHK…KRYQ), 152-229 (QLEK…EKQI), 237-264 (LSRD…EKQI), and 272-288 (LSRD…KVEA). Residues 83–289 (EEHKKVEEEH…REAKKKVEAD (207 aa)) are disordered. C repeat units lie at residues 151–185 (QQLE…EAEH), 186–220 (QKLK…EAEH), 221–255 (QKLK…EAEH), and 256–290 (QKLK…EADL). 4 D repeats span residues 323-328 (AKLEAE), 329-334 (AKALKE), 337-342 (AKQAEE), and 344-349 (AKLKGN). Positions 344–382 (AKLKGNQTPNAKVAPQANRSRSAMTQQKRTLPSTGETAN) are disordered. Residues 360–380 (ANRSRSAMTQQKRTLPSTGET) are compositionally biased toward polar residues. The LPXTG sorting signal motif lies at 374 to 378 (LPSTG). Residue T377 is modified to Pentaglycyl murein peptidoglycan amidated threonine. A propeptide spans 378-407 (GETANPFFTAAAATVMVSAGMLALKRKEEN) (removed by sortase).

The protein belongs to the M protein family.

The protein localises to the secreted. It localises to the cell wall. In terms of biological role, this protein is one of the different antigenic serotypes of protein M. Protein M is closely associated with virulence of the bacterium and can render the organism resistant to phagocytosis. The polypeptide is M protein, serotype 2.1 (emmL2.1) (Streptococcus pyogenes).